We begin with the raw amino-acid sequence, 211 residues long: Uracil phosphoribosyltransferase (211 aa).

5-phospho-alpha-D-ribose 1-diphosphate is bound by residues arginine 78, arginine 103, and 130-138; that span reads DPMLATGGT. Uracil is bound by residues isoleucine 195 and 200–202; that span reads GDA. A 5-phospho-alpha-D-ribose 1-diphosphate-binding site is contributed by aspartate 201.

It belongs to the UPRTase family. Requires Mg(2+) as cofactor.

The enzyme catalyses UMP + diphosphate = 5-phospho-alpha-D-ribose 1-diphosphate + uracil. The protein operates within pyrimidine metabolism; UMP biosynthesis via salvage pathway; UMP from uracil: step 1/1. Its activity is regulated as follows. Allosterically activated by GTP. In terms of biological role, catalyzes the conversion of uracil and 5-phospho-alpha-D-ribose 1-diphosphate (PRPP) to UMP and diphosphate. The polypeptide is Uracil phosphoribosyltransferase (Streptomyces coelicolor (strain ATCC BAA-471 / A3(2) / M145)).